The primary structure comprises 487 residues: MHISSLPGKYGIGTFGRSAYEFCDFLEKAGQKYWQILPLGQTSYGDSPYQSFSAFAGNPYFIDLDILNEKNLLDKDDYEEKNFGDNKEMINYGLIFNEKMKVLRKAYMNFNSKDDESFAKFIEDEKKWLDDYSLFMALKYKFNFISWNSWNKDIKLRKNEEIEKYKDELKEDVNYWKFLQYEFFSQWKNLKDYANKKNIKIIGDIPIYIAQDSSDVWSNPDIFLLNKETLEPLKVSGCPPDAFSETGQLWGNPIYDWGYLEKTNFEWWVDRIKSSLKLYDILRIDHFRGFEAYWSVDYGEKTAQNGKWIKGPEMKLFNVIKEKIGDIEIIAEDLGYLTEETLEFKKRTGFPGMKIIQFAFGGDSSNPYLPHNYEKNCVAYTGTHDNDTVRGWFEVTGSKEEKEKAVEYFKLTEEEGYNWGVIRGVWSSVANTSIGVMQDFLNLGNEARINKPSTLASNWSWRAKDNVFTNELANKIYRLTRIYGRCE.

This sequence belongs to the disproportionating enzyme family.

It is found in the cytoplasm. It catalyses the reaction Transfers a segment of a (1-&gt;4)-alpha-D-glucan to a new position in an acceptor, which may be glucose or a (1-&gt;4)-alpha-D-glucan.. Its function is as follows. Catalyzes a disproportionation reaction in which single or multiple glucose units from oligosaccharides are transferred to the 4-hydroxyl group of acceptor sugars. Glucose, maltose and maltotriose can act as acceptor, whereas of the three only maltotriose can act as donor. The polypeptide is 4-alpha-glucanotransferase (malQ) (Clostridium butyricum).